Reading from the N-terminus, the 228-residue chain is ATP synthase F(0) complex subunit a (228 aa).

5 helical membrane passes run 13-33 (NILA…IFPM), 69-89 (WALI…LGLL), 98-118 (QLSM…LIGL), 139-159 (IPTL…ALGV), and 194-214 (ILLF…ALVF).

It belongs to the ATPase A chain family. As to quaternary structure, component of the ATP synthase complex composed at least of ATP5F1A/subunit alpha, ATP5F1B/subunit beta, ATP5MC1/subunit c (homooctomer), MT-ATP6/subunit a, MT-ATP8/subunit 8, ATP5ME/subunit e, ATP5MF/subunit f, ATP5MG/subunit g, ATP5MK/subunit k, ATP5MJ/subunit j, ATP5F1C/subunit gamma, ATP5F1D/subunit delta, ATP5F1E/subunit epsilon, ATP5PF/subunit F6, ATP5PB/subunit b, ATP5PD/subunit d, ATP5PO/subunit OSCP. ATP synthase complex consists of a soluble F(1) head domain (subunits alpha(3) and beta(3)) - the catalytic core - and a membrane F(0) domain - the membrane proton channel (subunits c, a, 8, e, f, g, k and j). These two domains are linked by a central stalk (subunits gamma, delta, and epsilon) rotating inside the F1 region and a stationary peripheral stalk (subunits F6, b, d, and OSCP). Interacts with DNAJC30; interaction is direct.

Its subcellular location is the mitochondrion inner membrane. It catalyses the reaction H(+)(in) = H(+)(out). Its function is as follows. Subunit a, of the mitochondrial membrane ATP synthase complex (F(1)F(0) ATP synthase or Complex V) that produces ATP from ADP in the presence of a proton gradient across the membrane which is generated by electron transport complexes of the respiratory chain. ATP synthase complex consist of a soluble F(1) head domain - the catalytic core - and a membrane F(1) domain - the membrane proton channel. These two domains are linked by a central stalk rotating inside the F(1) region and a stationary peripheral stalk. During catalysis, ATP synthesis in the catalytic domain of F(1) is coupled via a rotary mechanism of the central stalk subunits to proton translocation. With the subunit c (ATP5MC1), forms the proton-conducting channel in the F(0) domain, that contains two crucial half-channels (inlet and outlet) that facilitate proton movement from the mitochondrial intermembrane space (IMS) into the matrix. Protons are taken up via the inlet half-channel and released through the outlet half-channel, following a Grotthuss mechanism. The polypeptide is ATP synthase F(0) complex subunit a (Pelomedusa subrufa (African side-necked turtle)).